The sequence spans 356 residues: Alanine racemase, catabolic (356 aa).

The active-site Proton acceptor; specific for D-alanine is the lysine 35. The residue at position 35 (lysine 35) is an N6-(pyridoxal phosphate)lysine. Arginine 130 is a binding site for substrate. Catalysis depends on tyrosine 253, which acts as the Proton acceptor; specific for L-alanine. Methionine 301 provides a ligand contact to substrate.

Belongs to the alanine racemase family. Requires pyridoxal 5'-phosphate as cofactor.

It carries out the reaction L-alanine = D-alanine. In terms of biological role, isomerizes L-alanine to D-alanine which is then oxidized to pyruvate by DadA. This is Alanine racemase, catabolic (dadX) from Salmonella typhi.